The following is a 444-amino-acid chain: D(2) dopamine receptor (444 aa).

Topologically, residues 1 to 37 (MDPLNLSWYDDDLERQNWSRPFNGSEGKPDRPHYNYY) are extracellular. N-linked (GlcNAc...) asparagine glycans are attached at residues N5, N17, and N23. Residues 38–60 (AMLLTLLIFIIVFGNVLVCMAVS) traverse the membrane as a helical segment. The Cytoplasmic segment spans residues 61-70 (REKALQTTTN). A helical transmembrane segment spans residues 71–93 (YLIVSLAVADLLVATLVMPWVVY). Topologically, residues 94–108 (LEVVGEWKFSRIHCD) are extracellular. A disulfide bridge links C107 with C182. The chain crosses the membrane as a helical span at residues 109–130 (IFVTLDVMMCTASILNLCAISI). The Cytoplasmic segment spans residues 131 to 151 (DRYTAVAMPMLYNTRYSSKRR). A helical transmembrane segment spans residues 152-172 (VTVMIAIVWVLSFTISCPLLF). Residues 173–188 (GLNNTDQNECIIANPA) are Extracellular-facing. Residues 189–213 (FVVYSSIVSFYVPFIVTLLVYIKIY) traverse the membrane as a helical segment. The interval 211-374 (KIYIVLRKRR…SQQKEKKATQ (164 aa)) is interaction with PPP1R9B. The Cytoplasmic segment spans residues 214–374 (IVLRKRRKRV…SQQKEKKATQ (161 aa)). Residues 282 to 329 (EMLSSTSPPERTRYSPIPPSHHQLTLPDPSHHGLHSNPDSPAKPEKNG) are disordered. The helical transmembrane segment at 375-396 (MLAIVLGVFIICWLPFFITHIL) threads the bilayer. Residues 397 to 410 (NIHCDCNIPPVLYS) lie on the Extracellular side of the membrane. A disulfide bridge links C400 with C402. A helical membrane pass occupies residues 411 to 432 (AFTWLGYVNSAVNPIIYTTFNI). The Cytoplasmic segment spans residues 433–444 (EFRKAFMKILHC). A lipid anchor (S-palmitoyl cysteine) is attached at C444.

Belongs to the G-protein coupled receptor 1 family. Forms homo- and heterooligomers with DRD4. The interaction with DRD4 may modulate agonist-induced downstream signaling. Interacts with CADPS and CADPS2. Interacts with GPRASP1, PPP1R9B and CLIC6. Interacts with ARRB2. Interacts with HTR2A. Interacts with DRD1. As to quaternary structure, interacts with KCNA2. Palmitoylated. Palmitoylation which is required for proper localization to the plasma membrane and stability of the receptor could be carried on by ZDHHC4, ZDHHC3 and ZDHHC8. Expressed in retinal hyaloid vessels at postnatal day 6. In terms of tissue distribution, expressed in the pituitary gland, stratum, brain stem and cortex. As to expression, expressed in the brain stem.

It localises to the cell membrane. It is found in the golgi apparatus membrane. Functionally, dopamine receptor whose activity is mediated by G proteins which inhibit adenylyl cyclase. Positively regulates postnatal regression of retinal hyaloid vessels via suppression of VEGFR2/KDR activity, downstream of OPN5. The polypeptide is D(2) dopamine receptor (Drd2) (Mus musculus (Mouse)).